Reading from the N-terminus, the 45-residue chain is Phospholipase A2 3 (45 aa).

3 residues coordinate Ca(2+): Tyr-20, Gly-24, and Gly-25. Cys-21 and Cys-36 are joined by a disulfide. Residue His-39 is part of the active site. Asp-40 contributes to the Ca(2+) binding site.

Ca(2+) serves as cofactor. Expressed by the venom gland.

Its subcellular location is the secreted. The enzyme catalyses a 1,2-diacyl-sn-glycero-3-phosphocholine + H2O = a 1-acyl-sn-glycero-3-phosphocholine + a fatty acid + H(+). PLA2 catalyzes the calcium-dependent hydrolysis of the 2-acyl groups in 3-sn-phosphoglycerides. This Bothrops diporus (Chaco lancehead) protein is Phospholipase A2 3.